The sequence spans 241 residues: Outer membrane protein A (241 aa).

5 consecutive transmembrane segments (beta stranded) span residues 1 to 8 (LTAKLSYP), 13 to 21 (LDIYTRLGG), 46 to 55 (PVFAGGVEYA), 60 to 67 (IATRLEYQ), and 86 to 94 (MLSVGVSYR). Repeat copies occupy residues 105 to 106 (AP), 107 to 108 (AP), 109 to 110 (AP), and 111 to 112 (AP). The 4 X 2 AA tandem repeats of A-P stretch occupies residues 105-112 (APAPAPAP). The region spanning 114-241 (VQTKHFTLKS…RRVEIEVKGV (128 aa)) is the OmpA-like domain. Cysteines 215 and 227 form a disulfide.

The protein belongs to the outer membrane OOP (TC 1.B.6) superfamily. OmpA family. In terms of assembly, monomer and homodimer.

It localises to the cell outer membrane. With TolR probably plays a role in maintaining the position of the peptidoglycan cell wall in the periplasm. Acts as a porin with low permeability that allows slow penetration of small solutes; an internal gate slows down solute passage. This chain is Outer membrane protein A, found in Shimwellia blattae (Escherichia blattae).